Reading from the N-terminus, the 284-residue chain is Proteasome subunit beta 1 (284 aa).

A propeptide spans 1-56 (MASHDSYTGRLPGAFMNPGTSSFTEFLASYNPDLLPGRHMTALAGGMPGNVEAPHA) (removed in mature form; by autocatalysis). Thr57 serves as the catalytic Nucleophile.

It belongs to the peptidase T1B family. In terms of assembly, the 20S proteasome core is composed of 14 alpha and 14 beta subunits that assemble into four stacked heptameric rings, resulting in a barrel-shaped structure. The two inner rings, each composed of seven catalytic beta subunits, are sandwiched by two outer rings, each composed of seven alpha subunits. The catalytic chamber with the active sites is on the inside of the barrel. Has a gated structure, the ends of the cylinder being occluded by the N-termini of the alpha-subunits. Is capped by the proteasome-associated ATPase, ARC.

It localises to the cytoplasm. It carries out the reaction Cleavage of peptide bonds with very broad specificity.. It functions in the pathway protein degradation; proteasomal Pup-dependent pathway. The formation of the proteasomal ATPase ARC-20S proteasome complex, likely via the docking of the C-termini of ARC into the intersubunit pockets in the alpha-rings, may trigger opening of the gate for substrate entry. Interconversion between the open-gate and close-gate conformations leads to a dynamic regulation of the 20S proteasome proteolysis activity. Its function is as follows. Component of the proteasome core, a large protease complex with broad specificity involved in protein degradation. The polypeptide is Proteasome subunit beta 1 (Thermomonospora curvata (strain ATCC 19995 / DSM 43183 / JCM 3096 / KCTC 9072 / NBRC 15933 / NCIMB 10081 / Henssen B9)).